We begin with the raw amino-acid sequence, 135 residues long: Holo-[acyl-carrier-protein] synthase (135 aa).

Residues D8 and E57 each contribute to the Mg(2+) site.

Belongs to the P-Pant transferase superfamily. AcpS family. Requires Mg(2+) as cofactor.

It localises to the cytoplasm. It catalyses the reaction apo-[ACP] + CoA = holo-[ACP] + adenosine 3',5'-bisphosphate + H(+). In terms of biological role, transfers the 4'-phosphopantetheine moiety from coenzyme A to a Ser of acyl-carrier-protein. The polypeptide is Holo-[acyl-carrier-protein] synthase (Xanthobacter autotrophicus (strain ATCC BAA-1158 / Py2)).